We begin with the raw amino-acid sequence, 383 residues long: Succinyl-diaminopimelate desuccinylase (383 aa).

Position 79 (His-79) interacts with Zn(2+). Asp-81 is a catalytic residue. Asp-110 is a Zn(2+) binding site. The active-site Proton acceptor is the Glu-141. Glu-142, Glu-170, and His-355 together coordinate Zn(2+).

This sequence belongs to the peptidase M20A family. DapE subfamily. As to quaternary structure, homodimer. Zn(2+) serves as cofactor. Requires Co(2+) as cofactor.

It catalyses the reaction N-succinyl-(2S,6S)-2,6-diaminopimelate + H2O = (2S,6S)-2,6-diaminopimelate + succinate. Its pathway is amino-acid biosynthesis; L-lysine biosynthesis via DAP pathway; LL-2,6-diaminopimelate from (S)-tetrahydrodipicolinate (succinylase route): step 3/3. Catalyzes the hydrolysis of N-succinyl-L,L-diaminopimelic acid (SDAP), forming succinate and LL-2,6-diaminopimelate (DAP), an intermediate involved in the bacterial biosynthesis of lysine and meso-diaminopimelic acid, an essential component of bacterial cell walls. The chain is Succinyl-diaminopimelate desuccinylase from Helicobacter pylori (strain P12).